The chain runs to 40 residues: Natriuretic peptide PaNP-b (40 aa).

The cysteines at positions 9 and 25 are disulfide-linked. A propeptide spanning residues 36–40 (IPGGS) is cleaved from the precursor.

It belongs to the natriuretic peptide family. Expressed by the venom gland.

The protein resides in the secreted. Functionally, snake venom natriuretic peptide that targets both NPR1 and NPR2. Exhibits hypotensive and vasodepressor activities. The polypeptide is Natriuretic peptide PaNP-b (Pseudechis australis (Mulga snake)).